Consider the following 676-residue polypeptide: Transcription factor RLM1 (676 aa).

Residues 3-57 (RRKIEIQRISDDRNRAVTFIKRKAGLFKKAHELSVLCQVDIAVIILGSNNTFYEF) form the MADS-box domain. The segment at residues 58-87 (SSVDTNDLIYHYQNDKNLLHEVKDPSDYGD) is a DNA-binding region (mef2-type). A compositionally biased stretch (polar residues) spans 103–120 (SSMSNKPSKSNVKGMNQS). The disordered stretch occupies residues 103 to 156 (SSMSNKPSKSNVKGMNQSENDDDENNDEDDDDHGNFERNSNMHSNKKASDKNIP). Ser-120 carries the post-translational modification Phosphoserine. Residues 121–134 (ENDDDENNDEDDDD) show a composition bias toward acidic residues. Ser-164 bears the Phosphoserine mark. Positions 173–183 (DGSEQNKRHPE) are enriched in basic and acidic residues. 5 disordered regions span residues 173-192 (DGSE…LQHL), 202-318 (ISRT…RRKL), 330-424 (NNNF…PFGS), 472-514 (KKQS…VHDL), and 532-631 (MGPN…NSST). The span at 260 to 276 (ISPNKFSKPFTNASSRT) shows a compositional bias: polar residues. Low complexity predominate over residues 284-295 (NNSGSNNNDNSN). Positions 296-312 (YTQSPSNSLEDSIQQTV) are enriched in polar residues. Composition is skewed to low complexity over residues 334 to 359 (SSNS…MGSS), 368 to 381 (SRSS…ASAS), and 399 to 417 (PNAN…NNNN). Residues Ser-374 and Ser-377 each carry the phosphoserine modification. Residues 472–506 (KKQSQTVPLTTTLTGRPPSTFSGPETSNGPPTGSL) show a composition bias toward polar residues. Over residues 539-604 (PGNTNNPGTF…NSNNSYYSNN (66 aa)) the composition is skewed to low complexity. Residues 621 to 631 (GDSNNQSNSST) show a composition bias toward polar residues.

It belongs to the MEF2 family. In terms of assembly, can heterodimerize with SPM1. Interacts with KDX1 and SLT2. Phosphorylated by SLT2.

It is found in the nucleus. Its function is as follows. May function as a transcription factor downstream of MPK1 that is subject to activation by the MPK1 mitogen-activated protein kinase pathway. Binds to the DNA sequence 5'-CTA[TA](4)TAG-3'. At least some RML1 target genes are involved in cell wall biosynthesis. This Saccharomyces cerevisiae (strain ATCC 204508 / S288c) (Baker's yeast) protein is Transcription factor RLM1 (RLM1).